The following is a 175-amino-acid chain: Auxin-responsive protein IAA28 (175 aa).

Residues 1-39 (MEEEKRLELRLAPPCHQFTSNNNINGSKQKSSTKETSFL) are disordered. The EAR-like (transcriptional repression) signature appears at 7-11 (LELRL). Over residues 17-39 (QFTSNNNINGSKQKSSTKETSFL) the composition is skewed to polar residues. The 82-residue stretch at 80 to 161 (ELYVKINMEG…TVKRLHVLKT (82 aa)) folds into the PB1 domain.

The protein belongs to the Aux/IAA family. In terms of assembly, homodimers and heterodimers. Interacts with TPL. As to expression, in roots and inflorescence stems.

It is found in the nucleus. Its function is as follows. Aux/IAA proteins are short-lived transcriptional factors that function as repressors of early auxin response genes at low auxin concentrations. Repression is thought to result from the interaction with auxin response factors (ARFs), proteins that bind to the auxin-responsive promoter element (AuxRE). Formation of heterodimers with ARF proteins may alter their ability to modulate early auxin response genes expression. The protein is Auxin-responsive protein IAA28 (IAA28) of Arabidopsis thaliana (Mouse-ear cress).